Reading from the N-terminus, the 228-residue chain is Endonuclease V (228 aa).

Residues aspartate 43 and aspartate 109 each coordinate Mg(2+).

Belongs to the endonuclease V family. It depends on Mg(2+) as a cofactor.

The protein localises to the cytoplasm. The catalysed reaction is Endonucleolytic cleavage at apurinic or apyrimidinic sites to products with a 5'-phosphate.. Its function is as follows. DNA repair enzyme involved in the repair of deaminated bases. Selectively cleaves double-stranded DNA at the second phosphodiester bond 3' to a deoxyinosine leaving behind the intact lesion on the nicked DNA. This chain is Endonuclease V, found in Dictyoglomus turgidum (strain DSM 6724 / Z-1310).